The chain runs to 295 residues: UDP-N-acetylenolpyruvoylglucosamine reductase (295 aa).

One can recognise an FAD-binding PCMH-type domain in the interval 23–188; it reads KVGGPADFLA…ISAKFALKPG (166 aa). The active site involves Arg167. Residue Ser217 is the Proton donor of the active site. Glu287 is a catalytic residue.

This sequence belongs to the MurB family. FAD is required as a cofactor.

It localises to the cytoplasm. It carries out the reaction UDP-N-acetyl-alpha-D-muramate + NADP(+) = UDP-N-acetyl-3-O-(1-carboxyvinyl)-alpha-D-glucosamine + NADPH + H(+). It participates in cell wall biogenesis; peptidoglycan biosynthesis. Functionally, cell wall formation. The sequence is that of UDP-N-acetylenolpyruvoylglucosamine reductase from Streptococcus pyogenes serotype M49 (strain NZ131).